Here is a 218-residue protein sequence, read N- to C-terminus: Thiopurine S-methyltransferase (218 aa).

Residues tryptophan 10, leucine 45, glutamate 66, and arginine 123 each coordinate S-adenosyl-L-methionine.

It belongs to the class I-like SAM-binding methyltransferase superfamily. TPMT family.

It is found in the cytoplasm. It carries out the reaction S-adenosyl-L-methionine + a thiopurine = S-adenosyl-L-homocysteine + a thiopurine S-methylether.. This is Thiopurine S-methyltransferase from Shewanella putrefaciens (strain CN-32 / ATCC BAA-453).